Reading from the N-terminus, the 401-residue chain is Probable aspartic-type endopeptidase TRV_05382 (401 aa).

An N-terminal signal peptide occupies residues 1–22 (MWHSPFFTAFTLFLGFFTLTLA). N-linked (GlcNAc...) asparagine glycans are attached at residues asparagine 80 and asparagine 102. A Peptidase A1 domain is found at 94-398 (FVNEITIGNN…DHDGPKMGFA (305 aa)). Aspartate 110 is a catalytic residue. Asparagine 282 carries an N-linked (GlcNAc...) asparagine glycan. The active site involves aspartate 292. An N-linked (GlcNAc...) asparagine glycan is attached at asparagine 329.

Belongs to the peptidase A1 family.

Its subcellular location is the secreted. Its function is as follows. Probable aspartic-type endopeptidase which contributes to virulence. This is Probable aspartic-type endopeptidase TRV_05382 from Trichophyton verrucosum (strain HKI 0517).